The primary structure comprises 446 residues: Phosphoglucosamine mutase (446 aa).

Ser-102 functions as the Phosphoserine intermediate in the catalytic mechanism. The Mg(2+) site is built by Ser-102, Asp-241, Asp-243, and Asp-245. Ser-102 carries the phosphoserine modification.

The protein belongs to the phosphohexose mutase family. Requires Mg(2+) as cofactor. Activated by phosphorylation.

The enzyme catalyses alpha-D-glucosamine 1-phosphate = D-glucosamine 6-phosphate. Its function is as follows. Catalyzes the conversion of glucosamine-6-phosphate to glucosamine-1-phosphate. This is Phosphoglucosamine mutase from Yersinia enterocolitica serotype O:8 / biotype 1B (strain NCTC 13174 / 8081).